The sequence spans 228 residues: L-ribulose-5-phosphate 4-epimerase UlaF (228 aa).

Residues 26–27 (GN), 43–44 (SG), and 72–73 (SS) contribute to the substrate site. Residues aspartate 74, histidine 93, and histidine 95 each coordinate Zn(2+). Aspartate 118 acts as the Proton donor/acceptor in catalysis. Histidine 167 contributes to the Zn(2+) binding site. Tyrosine 225 functions as the Proton donor/acceptor in the catalytic mechanism.

It belongs to the aldolase class II family. AraD/FucA subfamily. It depends on Zn(2+) as a cofactor.

It catalyses the reaction L-ribulose 5-phosphate = D-xylulose 5-phosphate. The protein operates within cofactor degradation; L-ascorbate degradation; D-xylulose 5-phosphate from L-ascorbate: step 4/4. Functionally, catalyzes the isomerization of L-ribulose 5-phosphate to D-xylulose 5-phosphate. Is involved in the anaerobic L-ascorbate utilization. The chain is L-ribulose-5-phosphate 4-epimerase UlaF from Escherichia fergusonii (strain ATCC 35469 / DSM 13698 / CCUG 18766 / IAM 14443 / JCM 21226 / LMG 7866 / NBRC 102419 / NCTC 12128 / CDC 0568-73).